A 403-amino-acid chain; its full sequence is Leu/Ile/Val-binding protein homolog 8 (403 aa).

Positions 1–26 (MRLSRLLIGASLGVALSSTVFTAALA) are cleaved as a signal peptide.

This sequence belongs to the leucine-binding protein family.

In terms of biological role, component of an amino-acid transport system. This Brucella melitensis biotype 1 (strain ATCC 23456 / CCUG 17765 / NCTC 10094 / 16M) protein is Leu/Ile/Val-binding protein homolog 8.